A 195-amino-acid chain; its full sequence is MSAARPQFSIDDAFELSLEDGGPGPESSGVARFGPLHFERRARFEVADEDKQSRLRYQNLENDEDGAQASPEPDGGVGTRDSSRTSIRSSQWSFSTISSSTQRSYNTCCSWTQHPLIQKNRRVVLASFLLLLLGLVLILVGVGLEATPSPGVSSAIFFVPGFLLLVPGVYHVIFIYCAVKGHRGFQFFYLPYFEK.

Disordered regions lie at residues Met-1 to Phe-33 and Asp-48 to Arg-88. Residues Met-1 to Arg-122 are Cytoplasmic-facing. Ser-93 carries the phosphoserine modification. A helical membrane pass occupies residues Val-123–Gly-143. Residues Leu-144 to Ser-154 lie on the Extracellular side of the membrane. Residues Ala-155–Ile-175 form a helical membrane-spanning segment. The Cytoplasmic segment spans residues Tyr-176–Lys-195.

It belongs to the TMEM134/TMEM230 family. As to quaternary structure, (Microbial infection) Interacts with Hepatitis E virus (HEV) ORF2.

It localises to the membrane. Its subcellular location is the cytoplasm. It is found in the perinuclear region. This chain is Transmembrane protein 134 (TMEM134), found in Homo sapiens (Human).